The sequence spans 154 residues: MAENGGRAGKSSGSGTGKGAVSAEQVIAGFNRLRQEQRGLASKAAELEMELNEHSLVIDTLKEVDETRKCYRMVGGVLVERTVKEVLPALENNKEQIQKIIETLTQQLQAKGKELNEFREKHNIRLMGEDEKPAAKENSEGAGAKASSAGVLVS.

The segment covering 1 to 18 (MAENGGRAGKSSGSGTGK) has biased composition (gly residues). Disordered stretches follow at residues 1-20 (MAEN…GKGA) and 124-154 (IRLM…VLVS). Positions 124-139 (IRLMGEDEKPAAKENS) are enriched in basic and acidic residues. Residues 140–154 (EGAGAKASSAGVLVS) are compositionally biased toward low complexity.

It belongs to the prefoldin subunit beta family. As to quaternary structure, heterohexamer of two PFD-alpha type and four PFD-beta type subunits. Component of the PAQosome complex which is responsible for the biogenesis of several protein complexes and which consists of R2TP complex members RUVBL1, RUVBL2, RPAP3 and PIH1D1, URI complex members PFDN2, PFDN6, PDRG1, UXT and URI1 as well as ASDURF, POLR2E and DNAAF10/WDR92. Interacts with URI1; the interaction is phosphorylation-dependent and occurs in a growth-dependent manner.

The protein resides in the nucleus. It is found in the cytoplasm. The protein localises to the mitochondrion. In terms of biological role, binds specifically to cytosolic chaperonin (c-CPN) and transfers target proteins to it. Binds to nascent polypeptide chain and promotes folding in an environment in which there are many competing pathways for nonnative proteins. In Bos taurus (Bovine), this protein is Prefoldin subunit 2 (PFDN2).